The sequence spans 1007 residues: Calmodulin-binding transcription activator 1 (1007 aa).

A DNA-binding region (CG-1) is located at residues 18–144; that stretch reads MEQLLSEAQH…YLEVKGNRTS (127 aa). Positions 148 to 164 are enriched in polar residues; it reads KENNSNSVNGTASVNID. Positions 148–227 are disordered; the sequence is KENNSNSVNG…VHGNRVRESD (80 aa). Residues 165–176 are compositionally biased toward low complexity; it reads STASPTSTLSSL. The segment covering 183–202 has biased composition (polar residues); that stretch reads GDSQQASSVLRPSPEPQTGN. The tract at residues 233-398 is transcription activation; the sequence is DVRALDTVGN…TVECETAAAG (166 aa). ANK repeat units follow at residues 612–641 and 645–674; these read DGQGILHFVAALGYDWAIKPVLAAGVNINF and NGWSALHWAAFSGREETVAVLVSLGADAGA. IQ domains lie at 821-850 and 844-873; these read LSCAATHIQKKYRGWKKRKEFLLIRQRIVK and IRQRIVKIQAHVRGHQVRKQYRTVIWSVGL. The segment at 869-891 is calmodulin-binding; that stretch reads WSVGLLEKIILRWRRKGNGLRGF. Residues 915 to 943 adopt a coiled-coil conformation; the sequence is QEDEYDYLKEGRKQTEERLQKALTRVKSM. Serine 942 is modified (phosphoserine).

The protein belongs to the CAMTA family. Expressed in roots, stems, leaves, pollen and siliques.

Its subcellular location is the nucleus. Its function is as follows. Transcription activator that binds calmodulin in a calcium-dependent manner in vitro. Binds to the DNA consensus sequence 5'-[ACG]CGCG[GTC]-3'. Regulates transcriptional activity in response to calcium signals. Involved in freezing tolerance. Involved in freezing tolerance in association with CAMTA2 and CAMTA3. Contributes together with CAMTA2 and CAMTA3 to the positive regulation of the cold-induced expression of DREB1A/CBF3, DREB1B/CBF1 and DREB1C/CBF2. Involved in drought stress responses by regulating several drought-responsive genes. Involved in auxin signaling and responses to abiotic stresses. Activates the expression of the V-PPase proton pump AVP1 in pollen. This chain is Calmodulin-binding transcription activator 1, found in Arabidopsis thaliana (Mouse-ear cress).